Here is a 163-residue protein sequence, read N- to C-terminus: Putative pre-16S rRNA nuclease (163 aa).

This sequence belongs to the YqgF nuclease family.

It is found in the cytoplasm. Its function is as follows. Could be a nuclease involved in processing of the 5'-end of pre-16S rRNA. This Rhodopseudomonas palustris (strain BisA53) protein is Putative pre-16S rRNA nuclease.